The chain runs to 497 residues: Arginine/ornithine antiporter ArcD2 (497 aa).

A run of 13 helical transmembrane segments spans residues 8 to 28 (GISLFALLAIIISGAIGGGVF), 41 to 61 (GGVVISWLFIGFGILMLVLSF), 88 to 108 (FLSGWGYWISAWTGTIGFAVL), 127 to 147 (SLTILSVIIVSIISWILMLLV), 160 to 180 (IVMIAKLIPLVVFSITGIILF), 220 to 240 (IKGSLMVMVWVFVGIEGATMM), 255 to 275 (VIGLAVLLVIYVLLSLLPYGY), 297 to 317 (VGGWGGSLMAVGLMISLLGAW), 354 to 374 (LLITQLMIQIFIIITYFVANA), 378 to 398 (FIYMATAVIMICYALVGAYLF), 406 to 426 (SVKNILIGFFTFAFQALALYL), 429 to 449 (WQYVWLAMILYTIGFLLFIGA), and 462 to 482 (WLGMLVVTVLGVLAIVVLICG).

This sequence belongs to the amino acid-polyamine-organocation (APC) superfamily. Basic amino acid/polyamine antiporter (APA) (TC 2.A.3.2) family.

Its subcellular location is the cell membrane. It catalyses the reaction L-ornithine(in) + L-arginine(out) = L-ornithine(out) + L-arginine(in). In terms of biological role, catalyzes electroneutral exchange between L-arginine and L-ornithine. Can also efficiently translocate L-alanine. May function in vivo as a L-arginine/L-alanine exchanger in a pathway together with the arcT gene, which is found adjacent to the arcD2 gene in the ADI gene cluster. In Lactococcus lactis subsp. cremoris (strain MG1363), this protein is Arginine/ornithine antiporter ArcD2.